A 61-amino-acid polypeptide reads, in one-letter code: UPF0391 membrane protein Bpro_0066 (61 aa).

A run of 2 helical transmembrane segments spans residues 5–25 (AIIF…GVAA) and 33–53 (ILFG…ALGV).

This sequence belongs to the UPF0391 family.

Its subcellular location is the cell membrane. In Polaromonas sp. (strain JS666 / ATCC BAA-500), this protein is UPF0391 membrane protein Bpro_0066.